Here is a 283-residue protein sequence, read N- to C-terminus: Pantothenate synthetase (283 aa).

30 to 37 contacts ATP; sequence MGNLHDGH. His37 functions as the Proton donor in the catalytic mechanism. Position 61 (Gln61) interacts with (R)-pantoate. Gln61 lines the beta-alanine pocket. 149–152 serves as a coordination point for ATP; that stretch reads GEKD. A (R)-pantoate-binding site is contributed by Gln155. ATP-binding positions include Val178 and 186 to 189; that span reads LSSR.

Belongs to the pantothenate synthetase family. Homodimer.

The protein resides in the cytoplasm. The catalysed reaction is (R)-pantoate + beta-alanine + ATP = (R)-pantothenate + AMP + diphosphate + H(+). It functions in the pathway cofactor biosynthesis; (R)-pantothenate biosynthesis; (R)-pantothenate from (R)-pantoate and beta-alanine: step 1/1. In terms of biological role, catalyzes the condensation of pantoate with beta-alanine in an ATP-dependent reaction via a pantoyl-adenylate intermediate. This chain is Pantothenate synthetase, found in Salmonella arizonae (strain ATCC BAA-731 / CDC346-86 / RSK2980).